Consider the following 201-residue polypeptide: ATP-dependent Clp protease proteolytic subunit (201 aa).

Serine 98 functions as the Nucleophile in the catalytic mechanism. The active site involves histidine 123.

The protein belongs to the peptidase S14 family. In terms of assembly, fourteen ClpP subunits assemble into 2 heptameric rings which stack back to back to give a disk-like structure with a central cavity, resembling the structure of eukaryotic proteasomes.

Its subcellular location is the cytoplasm. The catalysed reaction is Hydrolysis of proteins to small peptides in the presence of ATP and magnesium. alpha-casein is the usual test substrate. In the absence of ATP, only oligopeptides shorter than five residues are hydrolyzed (such as succinyl-Leu-Tyr-|-NHMec, and Leu-Tyr-Leu-|-Tyr-Trp, in which cleavage of the -Tyr-|-Leu- and -Tyr-|-Trp bonds also occurs).. Cleaves peptides in various proteins in a process that requires ATP hydrolysis. Has a chymotrypsin-like activity. Plays a major role in the degradation of misfolded proteins. The protein is ATP-dependent Clp protease proteolytic subunit of Rickettsia felis (strain ATCC VR-1525 / URRWXCal2) (Rickettsia azadi).